Here is a 501-residue protein sequence, read N- to C-terminus: Dipeptide and tripeptide permease A (501 aa).

At 1–21 (MSTANKKPTESVSLNAFKQPK) the chain is on the cytoplasmic side. The chain crosses the membrane as a helical span at residues 22–44 (AFYLIFSIELWERFGYYGLQGIM). Residues 45 to 59 (AVYLVKQLGMSEADS) lie on the Periplasmic side of the membrane. The chain crosses the membrane as a helical span at residues 60–80 (ITLFSSFSALVYGLVAIGGWL). Over 81 to 89 (GDKILGTKR) the chain is Cytoplasmic. A helical transmembrane segment spans residues 90-110 (VIMLGAVVLAIGYALVAWSGH). Asp111 is a topological domain (periplasmic). A helical transmembrane segment spans residues 112-132 (AGIVYMGMAAIAVGNGLFKAN). The Cytoplasmic portion of the chain corresponds to 133–153 (PSSLLSTCYAKDDPRLDGAFT). The helical transmembrane segment at 154 to 174 (MYYMSVNIGSFFSMLATPWLA) threads the bilayer. Topologically, residues 175–178 (ARYG) are periplasmic. Residues 179-199 (WSTAFALSVVGMLITVVNFAF) form a helical membrane-spanning segment. At 200–219 (CQRWVKSYGSKPDFEPINFR) the chain is on the cytoplasmic side. A helical membrane pass occupies residues 220–240 (NLLLTIVGIVVLIAVATWLLH). Over 241-246 (NQDIAR) the chain is Periplasmic. A helical transmembrane segment spans residues 247 to 267 (MVLGVIALGIVIIFGKEAFSM). At 268–274 (HGAARRK) the chain is on the cytoplasmic side. Residues 275–295 (MIVAFILMLQAIIFFVLYSQM) form a helical membrane-spanning segment. Residues 296–320 (PTSLNFFAIRNVEHSILGIAFEPEQ) are Periplasmic-facing. A helical transmembrane segment spans residues 321–341 (YQALNPFWIIIGSPILAAIYN). Residues 342-352 (RMGDTLPMPMK) are Cytoplasmic-facing. Residues 353-373 (FAIGMVLCSGAFLILPLGAKF) form a helical membrane-spanning segment. Residues 374 to 383 (ANDAGIVSVN) are Periplasmic-facing. A helical transmembrane segment spans residues 384 to 404 (WLIASYGLQSIGELMISGLGL). The Cytoplasmic segment spans residues 405 to 414 (AMVAQLVPQR). A helical transmembrane segment spans residues 415–435 (LMGFIMGSWFLTTAGANIIGG). Residues 436-459 (YVANLMAVPSDVTDPLMSLEVYGR) are Periplasmic-facing. A helical membrane pass occupies residues 460–480 (VFMQIGIATAVIAVLMLLTAP). Over 481–501 (KLNRMTQDDDTAEKGSKAATV) the chain is Cytoplasmic.

Belongs to the major facilitator superfamily. Proton-dependent oligopeptide transporter (POT/PTR) (TC 2.A.17) family. DtpA subfamily.

It is found in the cell inner membrane. Proton-dependent permease that transports di- and tripeptides. The protein is Dipeptide and tripeptide permease A of Salmonella typhimurium (strain LT2 / SGSC1412 / ATCC 700720).